Consider the following 381-residue polypeptide: Spindlin interactor and repressor of chromatin-binding protein (381 aa).

The interval 42 to 73 is disordered; sequence RVTQQEKTPPPRPSPLEAGSDGCEEPKQQVSW. Lysine 48 participates in a covalent cross-link: Glycyl lysine isopeptide (Lys-Gly) (interchain with G-Cter in SUMO2). Phosphoserine is present on residues serine 121 and serine 148. Disordered regions lie at residues 144 to 264, 283 to 320, and 339 to 381; these read AEQP…EVRH, QLRG…LRGT, and LQDW…GNGV. Glycyl lysine isopeptide (Lys-Gly) (interchain with G-Cter in SUMO2) cross-links involve residues lysine 189 and lysine 220. Residues 218 to 228 show a composition bias toward basic and acidic residues; that stretch reads RWKEPPGEEPV. 2 positions are modified to phosphoserine: serine 248 and serine 251. A compositionally biased stretch (basic and acidic residues) spans 287–299; sequence PDSKDSPKDREVA. Glycyl lysine isopeptide (Lys-Gly) (interchain with G-Cter in SUMO2) cross-links involve residues lysine 290 and lysine 294. 2 positions are modified to phosphoserine: serine 308 and serine 310. Residue lysine 374 forms a Glycyl lysine isopeptide (Lys-Gly) (interchain with G-Cter in SUMO2) linkage.

As to quaternary structure, interacts with SPIN1, SPIN2A, SPIN2B, SPIN3 and SPIN4. Interacts with TCF7L2 in a SPIN1-dependent manner. Interacts with PARP1; promoting PARP1 ADP-ribosyltransferase activity.

Its subcellular location is the nucleus. The protein localises to the chromosome. Its function is as follows. Chromatin protein that stabilizes SPIN1 and enhances its association with histone H3 trimethylated at both 'Lys-4' and 'Lys-9' (H3K4me3K9me3). Positively regulates poly-ADP-ribosylation in response to DNA damage; acts by facilitating PARP1 ADP-ribosyltransferase activity. The protein is Spindlin interactor and repressor of chromatin-binding protein of Homo sapiens (Human).